An 896-amino-acid polypeptide reads, in one-letter code: Bifunctional glutamine synthetase adenylyltransferase/adenylyl-removing enzyme (896 aa).

The interval 1 to 411 (MSDNRLDTAR…LFNEILSEPE (411 aa)) is adenylyl removase. Positions 417–896 (NSEWQWAWQE…EVFGEEAATA (480 aa)) are adenylyl transferase.

This sequence belongs to the GlnE family. Mg(2+) is required as a cofactor.

The catalysed reaction is [glutamine synthetase]-O(4)-(5'-adenylyl)-L-tyrosine + phosphate = [glutamine synthetase]-L-tyrosine + ADP. It carries out the reaction [glutamine synthetase]-L-tyrosine + ATP = [glutamine synthetase]-O(4)-(5'-adenylyl)-L-tyrosine + diphosphate. Involved in the regulation of glutamine synthetase GlnA, a key enzyme in the process to assimilate ammonia. When cellular nitrogen levels are high, the C-terminal adenylyl transferase (AT) inactivates GlnA by covalent transfer of an adenylyl group from ATP to specific tyrosine residue of GlnA, thus reducing its activity. Conversely, when nitrogen levels are low, the N-terminal adenylyl removase (AR) activates GlnA by removing the adenylyl group by phosphorolysis, increasing its activity. The regulatory region of GlnE binds the signal transduction protein PII (GlnB) which indicates the nitrogen status of the cell. The polypeptide is Bifunctional glutamine synthetase adenylyltransferase/adenylyl-removing enzyme (Neisseria meningitidis serogroup A / serotype 4A (strain DSM 15465 / Z2491)).